The primary structure comprises 166 residues: 3-isopropylmalate dehydratase small subunit 2 (166 aa).

Belongs to the LeuD family. LeuD type 2 subfamily. As to quaternary structure, heterodimer of LeuC and LeuD.

The catalysed reaction is (2R,3S)-3-isopropylmalate = (2S)-2-isopropylmalate. It participates in amino-acid biosynthesis; L-leucine biosynthesis; L-leucine from 3-methyl-2-oxobutanoate: step 2/4. Catalyzes the isomerization between 2-isopropylmalate and 3-isopropylmalate, via the formation of 2-isopropylmaleate. This chain is 3-isopropylmalate dehydratase small subunit 2 (leuD2), found in Thermotoga maritima (strain ATCC 43589 / DSM 3109 / JCM 10099 / NBRC 100826 / MSB8).